The following is a 628-amino-acid chain: MPNLIADPERLKERLELLPTSAGVYLMRDEAGEILYVGKAKNLRNRVRSYFQPGHDHSPRIAIMVGKVHDFELILTDTEAEALVLEDNLIKTHKPRYNVLLKDDKQYPYLCITWSEEYPRIFVTRRRGSGHPEDRYFGPYTDAGALHSTLGLLKKLFPLRQRNTPVFKDRPCINYEMGRCPGLCQRLISPQEYRATIRQIQMILQGRTAELLAQLEDQMQTAAAAMNFEHAARLRDRITGLNQLGAHQKITVPDSSVSRDAVALAADAALVSIQLFQVRSGKLIGRLGFSAAASGEDPGHILQRVLEEHYRASASEEIPLEVLTQHPLPEADILATWLAEKKGRKVEIHAPQRQIKAELVEMVARNAEAELQRLERFSRRQEKGLLNLAEALELPSVPRRMECYDISHIQGTDTVASRVVFVDGAPAKQYYRHYKIRDPRIVAGRPDDFASMAEVISRRFARAESEPEGDLPDLVVIDGGKGQLSAARAVMEELSYGDVPTIGLAKRLEEVFLPGRSDPVLIAQGDPALHLLQRIRDEAHRFAVSFHREQRGKRMTRSSLDDIPGIGPAKRKILLDTFRSVPVLEKASFEEIAKTPGIGSRLAQVIHTYFHGEPEAVARALEAEQAAN.

The GIY-YIG domain occupies 20 to 99 (TSAGVYLMRD…IKTHKPRYNV (80 aa)). The UVR domain occupies 209 to 244 (AELLAQLEDQMQTAAAAMNFEHAARLRDRITGLNQL).

This sequence belongs to the UvrC family. Interacts with UvrB in an incision complex.

The protein localises to the cytoplasm. Functionally, the UvrABC repair system catalyzes the recognition and processing of DNA lesions. UvrC both incises the 5' and 3' sides of the lesion. The N-terminal half is responsible for the 3' incision and the C-terminal half is responsible for the 5' incision. In Gloeobacter violaceus (strain ATCC 29082 / PCC 7421), this protein is UvrABC system protein C.